The sequence spans 229 residues: Echinolectin 1 (229 aa).

Residue Asn94 is glycosylated (N-linked (GlcNAc...) asparagine).

The protein localises to the secreted. This chain is Echinolectin 1, found in Echinometra lucunter (Rock-boring urchin).